Here is a 116-residue protein sequence, read N- to C-terminus: Putative iron-sulfur cluster insertion protein ErpA (116 aa).

Iron-sulfur cluster contacts are provided by C44, C108, and C110.

Belongs to the HesB/IscA family. Homodimer. The cofactor is iron-sulfur cluster.

Required for insertion of 4Fe-4S clusters. The sequence is that of Putative iron-sulfur cluster insertion protein ErpA from Azoarcus sp. (strain BH72).